The primary structure comprises 450 residues: Interferon-induced protein 75 (450 aa).

The HSR domain occupies 1–108; sequence MFTLTKALEK…IFRSFRNVGY (108 aa). 2 disordered regions span residues 131 to 156 and 170 to 225; these read CSLQTLLPPPRPQLSLPSHLSSAPRV and LDEQ…VKDD. Residues 143 to 154 are compositionally biased toward low complexity; it reads QLSLPSHLSSAP. A phosphoserine mark is found at serine 175 and serine 177. A compositionally biased stretch (basic and acidic residues) spans 197–212; that stretch reads SRDHQRKDKEDSREMP. At serine 226 the chain carries Phosphoserine. Disordered regions lie at residues 238–283 and 318–360; these read VLCT…HGVQ and AQTS…KNDA. Basic residues predominate over residues 245 to 267; it reads KKARRKKRLNWSNSKRGRQKKKP. A Nuclear localization signal motif is present at residues 251–266; that stretch reads KRLNWSNSKRGRQKKK. Residues 343 to 353 show a composition bias toward polar residues; that stretch reads TSTAGKTTQVP. Residues 358-439 enclose the SAND domain; the sequence is NDAVDFLSPT…RQLEQKGLLF (82 aa).

It localises to the nucleus. The sequence is that of Interferon-induced protein 75 (Ifi75) from Mus caroli (Ryukyu mouse).